Consider the following 452-residue polypeptide: Pup--protein ligase (452 aa).

Position 9 (Glu9) interacts with Mg(2+). Arg53 serves as a coordination point for ATP. Residue Tyr55 participates in Mg(2+) binding. Residue Asp57 is the Proton acceptor of the active site. Mg(2+) is bound at residue Glu63. Thr66 and Trp419 together coordinate ATP.

This sequence belongs to the Pup ligase/Pup deamidase family. Pup-conjugating enzyme subfamily.

The catalysed reaction is ATP + [prokaryotic ubiquitin-like protein]-L-glutamate + [protein]-L-lysine = ADP + phosphate + N(6)-([prokaryotic ubiquitin-like protein]-gamma-L-glutamyl)-[protein]-L-lysine.. The protein operates within protein degradation; proteasomal Pup-dependent pathway. Its pathway is protein modification; protein pupylation. Catalyzes the covalent attachment of the prokaryotic ubiquitin-like protein modifier Pup to the proteasomal substrate proteins, thereby targeting them for proteasomal degradation. This tagging system is termed pupylation. The ligation reaction involves the side-chain carboxylate of the C-terminal glutamate of Pup and the side-chain amino group of a substrate lysine. The polypeptide is Pup--protein ligase (Mycobacterium ulcerans (strain Agy99)).